A 72-amino-acid polypeptide reads, in one-letter code: Translation initiation factor IF-1 (72 aa).

The S1-like domain occupies 1 to 72; it reads MAKDDVIQMQ…SRARIVFRAK (72 aa).

Belongs to the IF-1 family. In terms of assembly, component of the 30S ribosomal translation pre-initiation complex which assembles on the 30S ribosome in the order IF-2 and IF-3, IF-1 and N-formylmethionyl-tRNA(fMet); mRNA recruitment can occur at any time during PIC assembly.

The protein resides in the cytoplasm. Its function is as follows. One of the essential components for the initiation of protein synthesis. Stabilizes the binding of IF-2 and IF-3 on the 30S subunit to which N-formylmethionyl-tRNA(fMet) subsequently binds. Helps modulate mRNA selection, yielding the 30S pre-initiation complex (PIC). Upon addition of the 50S ribosomal subunit IF-1, IF-2 and IF-3 are released leaving the mature 70S translation initiation complex. The sequence is that of Translation initiation factor IF-1 from Burkholderia thailandensis (strain ATCC 700388 / DSM 13276 / CCUG 48851 / CIP 106301 / E264).